A 709-amino-acid chain; its full sequence is Putative extracellular sulfatase Sulf-1 homolog (709 aa).

A signal peptide spans 1–27; sequence MISNLRISNYFIIFYVLFLIIPIKVTS. 3 residues coordinate Ca(2+): Asp43, Asp44, and Cys79. The active-site Nucleophile is the Cys79. At Cys79 the chain carries 3-oxoalanine (Cys). N-linked (GlcNAc...) asparagine glycosylation is found at Asn103, Asn162, and Asn189. Ca(2+)-binding residues include Asp308 and His309. Asn344, Asn468, Asn500, Asn540, Asn566, Asn610, and Asn620 each carry an N-linked (GlcNAc...) asparagine glycan.

It belongs to the sulfatase family. It depends on Ca(2+) as a cofactor. Post-translationally, the conversion to 3-oxoalanine (also known as C-formylglycine, FGly), of a serine or cysteine residue in prokaryotes and of a cysteine residue in eukaryotes, is critical for catalytic activity.

Its subcellular location is the endoplasmic reticulum. The protein localises to the golgi apparatus. The protein resides in the golgi stack. It localises to the cell surface. The protein is Putative extracellular sulfatase Sulf-1 homolog (sul-1) of Caenorhabditis elegans.